Reading from the N-terminus, the 385-residue chain is S-adenosylmethionine synthase (385 aa).

His16 lines the ATP pocket. A Mg(2+)-binding site is contributed by Asp18. Residue Glu44 coordinates K(+). Glu57 and Gln100 together coordinate L-methionine. The interval 100–110 (QSPDINQGVDR) is flexible loop. ATP contacts are provided by residues 164-166 (DGK), 230-231 (KF), Asp239, 245-246 (RK), Ala262, and Lys266. Residue Asp239 coordinates L-methionine. Lys270 serves as a coordination point for L-methionine.

The protein belongs to the AdoMet synthase family. In terms of assembly, homotetramer; dimer of dimers. The cofactor is Mg(2+). It depends on K(+) as a cofactor.

It is found in the cytoplasm. The enzyme catalyses L-methionine + ATP + H2O = S-adenosyl-L-methionine + phosphate + diphosphate. It functions in the pathway amino-acid biosynthesis; S-adenosyl-L-methionine biosynthesis; S-adenosyl-L-methionine from L-methionine: step 1/1. In terms of biological role, catalyzes the formation of S-adenosylmethionine (AdoMet) from methionine and ATP. The overall synthetic reaction is composed of two sequential steps, AdoMet formation and the subsequent tripolyphosphate hydrolysis which occurs prior to release of AdoMet from the enzyme. The chain is S-adenosylmethionine synthase from Helicobacter pylori (strain ATCC 700392 / 26695) (Campylobacter pylori).